We begin with the raw amino-acid sequence, 247 residues long: Adiponectin (247 aa).

The N-terminal stretch at 1-17 (MLLLQALLFLLILPSHA) is a signal peptide. Thr-23 and Thr-24 each carry an O-linked (GalNAc...) threonine glycan. At Lys-36 the chain carries 5-hydroxylysine. Cys-39 is modified (S-(2-succinyl)cysteine). A disordered region spans residues 44–105 (AGIPGHPGHN…GFPGTPGRKG (62 aa)). The region spanning 45-110 (GIPGHPGHNG…PGRKGEPGEA (66 aa)) is the Collagen-like domain. 4-hydroxyproline occurs at positions 47, 50, and 56. The segment covering 58 to 73 (RDGRDGTPGEKGEKGD) has biased composition (basic and acidic residues). Residues Lys-68, Lys-71, and Lys-80 each carry the 5-hydroxylysine; alternate modification. O-linked (Gal...) hydroxylysine; alternate glycans are attached at residues Lys-68, Lys-71, and Lys-80. At Pro-94 the chain carries 4-hydroxyproline. Lys-104 is modified (5-hydroxylysine; alternate). Lys-104 is a glycosylation site (O-linked (Gal...) hydroxylysine; alternate). A C1q domain is found at 111–247 (AYVYRSAFSV…TGFLLYHDTN (137 aa)).

Homomultimer. Forms trimers, hexamers and 12- to 18-mers. The trimers (low molecular weight complexes / LMW) are assembled via non-covalent interactions of the collagen-like domains in a triple helix and hydrophobic interactions within the globular C1q domain. Several trimers can associate to form disulfide-linked hexamers (middle molecular weight complexes / MMW) and larger complexes (higher molecular weight / HMW). The HMW-complex assembly is also modulated by the degree of lysine hydroxylation and glycosylation. LMW, MMW and HMW complexes bind to HBEGF, MMW and HMW complexes bind to PDGFB, and HMW complex binds to FGF2. Interacts with CTRP9 via the C1q domain (heterotrimeric complex). In terms of processing, HMW complexes are more extensively glycosylated than smaller oligomers. Hydroxylation and glycosylation of the lysine residues within the collagen-like domain of adiponectin seem to be critically involved in regulating the formation and/or secretion of HMW complexes and consequently contribute to the insulin-sensitizing activity of adiponectin in hepatocytes. O-glycosylated. Not N-glycosylated O-linked glycans on hydroxylysine residues consist of Glc-Gal disaccharides bound to the oxygen atom of post-translationally added hydroxyl groups. O-linked glycosylation in the N-terminal is disialylated with the structure Neu5Acalpha2-&gt;8Neu5Acalpha2-&gt;3Gal. Sialylated by alpha 2,8-sialyltransferase III. Post-translationally, succination of Cys-39 by the Krebs cycle intermediate fumarate, which leads to S-(2-succinyl)cysteine residues, inhibits polymerization and secretion of adiponectin. Adiponectin is a major target for succination in both adipocytes and adipose tissue of diabetic mice. It was proposed that succination of proteins is a biomarker of mitochondrial stress and accumulation of Krebs cycle intermediates in adipose tissue in diabetes and that succination of adiponectin may contribute to the decrease in plasma adiponectin in diabetes. Synthesized exclusively by adipocytes and secreted into plasma.

It localises to the secreted. Its activity is regulated as follows. Polymerization and secretion of adiponectin is inhibited by succination of cysteine residues by the Krebs cycle intermediate fumarate, which leads to S-(2-succinyl)cysteine residues. Its function is as follows. Important adipokine involved in the control of fat metabolism and insulin sensitivity, with direct anti-diabetic, anti-atherogenic and anti-inflammatory activities. Stimulates AMPK phosphorylation and activation in the liver and the skeletal muscle, enhancing glucose utilization and fatty-acid combustion. Antagonizes TNF-alpha by negatively regulating its expression in various tissues such as liver and macrophages, and also by counteracting its effects. Inhibits endothelial NF-kappa-B signaling through a cAMP-dependent pathway. May play a role in cell growth, angiogenesis and tissue remodeling by binding and sequestering various growth factors with distinct binding affinities, depending on the type of complex, LMW, MMW or HMW. The sequence is that of Adiponectin (Adipoq) from Mus musculus (Mouse).